The chain runs to 40 residues: Photosystem II reaction center protein J (40 aa).

A helical transmembrane segment spans residues 8–28; sequence IPLWIIGTVAGILVIGLVGIF.

The protein belongs to the PsbJ family. In terms of assembly, PSII is composed of 1 copy each of membrane proteins PsbA, PsbB, PsbC, PsbD, PsbE, PsbF, PsbH, PsbI, PsbJ, PsbK, PsbL, PsbM, PsbT, PsbX, PsbY, PsbZ, Psb30/Ycf12, at least 3 peripheral proteins of the oxygen-evolving complex and a large number of cofactors. It forms dimeric complexes.

Its subcellular location is the plastid. It localises to the chloroplast thylakoid membrane. Functionally, one of the components of the core complex of photosystem II (PSII). PSII is a light-driven water:plastoquinone oxidoreductase that uses light energy to abstract electrons from H(2)O, generating O(2) and a proton gradient subsequently used for ATP formation. It consists of a core antenna complex that captures photons, and an electron transfer chain that converts photonic excitation into a charge separation. The protein is Photosystem II reaction center protein J of Spinacia oleracea (Spinach).